We begin with the raw amino-acid sequence, 104 residues long: uncharacterized protein (104 aa).

Residues methionine 1 to alanine 18 form the signal peptide. An N-linked (GlcNAc...) asparagine; by host glycan is attached at asparagine 27.

This is an uncharacterized protein from Fowl adenovirus A serotype 1 (strain CELO / Phelps) (FAdV-1).